The primary structure comprises 429 residues: Ribosomal RNA small subunit methyltransferase B (429 aa).

Residues 254 to 260 (CAAPGGK), Asp-277, Asp-303, and Asp-322 contribute to the S-adenosyl-L-methionine site. The Nucleophile role is filled by Cys-375.

Belongs to the class I-like SAM-binding methyltransferase superfamily. RsmB/NOP family.

Its subcellular location is the cytoplasm. It carries out the reaction cytidine(967) in 16S rRNA + S-adenosyl-L-methionine = 5-methylcytidine(967) in 16S rRNA + S-adenosyl-L-homocysteine + H(+). Specifically methylates the cytosine at position 967 (m5C967) of 16S rRNA. The polypeptide is Ribosomal RNA small subunit methyltransferase B (Escherichia coli O157:H7).